An 84-amino-acid chain; its full sequence is Large ribosomal subunit protein bL27 (84 aa).

A disordered region spans residues 1 to 22; that stretch reads MAKTKAGGSTKNGRDSAGRRLG.

This sequence belongs to the bacterial ribosomal protein bL27 family.

This Mesomycoplasma hyopneumoniae (strain 232) (Mycoplasma hyopneumoniae) protein is Large ribosomal subunit protein bL27.